An 81-amino-acid polypeptide reads, in one-letter code: Cortexin-3 (81 aa).

A helical membrane pass occupies residues methionine 29–phenylalanine 49.

Belongs to the cortexin family.

Its subcellular location is the membrane. The chain is Cortexin-3 (CTXN3) from Homo sapiens (Human).